A 497-amino-acid polypeptide reads, in one-letter code: Probable cytosol aminopeptidase (497 aa).

Mn(2+)-binding residues include Lys-263 and Asp-268. The active site involves Lys-275. Positions 286, 345, and 347 each coordinate Mn(2+). Arg-349 is an active-site residue.

It belongs to the peptidase M17 family. It depends on Mn(2+) as a cofactor.

The protein localises to the cytoplasm. It catalyses the reaction Release of an N-terminal amino acid, Xaa-|-Yaa-, in which Xaa is preferably Leu, but may be other amino acids including Pro although not Arg or Lys, and Yaa may be Pro. Amino acid amides and methyl esters are also readily hydrolyzed, but rates on arylamides are exceedingly low.. The catalysed reaction is Release of an N-terminal amino acid, preferentially leucine, but not glutamic or aspartic acids.. In terms of biological role, presumably involved in the processing and regular turnover of intracellular proteins. Catalyzes the removal of unsubstituted N-terminal amino acids from various peptides. The protein is Probable cytosol aminopeptidase of Sinorhizobium fredii (strain NBRC 101917 / NGR234).